Consider the following 404-residue polypeptide: Ubiquitin-like modifier-activating enzyme 5 (404 aa).

Ser45 carries the post-translational modification Phosphoserine. ATP-binding residues include Gly83, Asp104, Lys127, Asn150, and Asn184. Zn(2+) is bound by residues Cys226 and Cys229. Cys250 functions as the Glycyl thioester intermediate in the catalytic mechanism. Zn(2+)-binding residues include Cys303 and Cys308. The UFM1-interacting sequence (UIS) signature appears at Ile334 to Val346. Residues Ser347–Lys377 are linker. Phosphoserine is present on residues Ser358 and Ser393. The UFC1-binding sequence (UFC) motif lies at Asp389 to Met404.

Belongs to the ubiquitin-activating E1 family. UBA5 subfamily. As to quaternary structure, homodimer; homodimerization is required for UFM1 activation. Interacts (via UIS motif) with UFM1; binds UFM1 via a trans-binding mechanism in which UFM1 interacts with distinct sites in both subunits of the UBA5 homodimer. Interacts (via C-terminus) with UFC1. Interacts (via UIS motif) with GABARAPL2 and, with lower affinity, with GABARAP and GABARAPL1.

It localises to the cytoplasm. The protein localises to the nucleus. The protein resides in the endoplasmic reticulum membrane. It is found in the golgi apparatus. Functionally, E1-like enzyme which specifically catalyzes the first step in ufmylation. Activates UFM1 by first adenylating its C-terminal glycine residue with ATP, and thereafter linking this residue to the side chain of a cysteine residue in E1, yielding a UFM1-E1 thioester and free AMP. Activates UFM1 via a trans-binding mechanism, in which UFM1 interacts with distinct sites in both subunits of the UBA5 homodimer. Trans-binding also promotes stabilization of the UBA5 homodimer, and enhances ATP-binding. Transfer of UFM1 from UBA5 to the E2-like enzyme UFC1 also takes place using a trans mechanism. Ufmylation plays a key role in various processes, such as ribosome recycling, response to DNA damage, interferon response or reticulophagy (also called ER-phagy). Ufmylation is essential for erythroid differentiation of both megakaryocytes and erythrocytes. This Pongo abelii (Sumatran orangutan) protein is Ubiquitin-like modifier-activating enzyme 5.